A 501-amino-acid polypeptide reads, in one-letter code: Cytochrome P450 6j1 (501 aa).

Cys444 is a heme binding site.

This sequence belongs to the cytochrome P450 family. The cofactor is heme.

The protein localises to the endoplasmic reticulum membrane. It localises to the microsome membrane. The polypeptide is Cytochrome P450 6j1 (CYP6J1) (Blattella germanica (German cockroach)).